Consider the following 363-residue polypeptide: NADH-quinone oxidoreductase subunit H (363 aa).

Transmembrane regions (helical) follow at residues 29-49 (VLKI…YVVW), 62-82 (GPMY…KLLF), 96-116 (FIIA…VVPF), 127-147 (VGLL…ILAG), 163-183 (AAQV…VMIA), 202-222 (FFDW…VSGV), 239-257 (IVAG…LFFL), 264-286 (ILVS…QGWV), 299-319 (TGGW…YIWF), and 339-359 (FIPL…YGVI).

The protein belongs to the complex I subunit 1 family. In terms of assembly, NDH-1 is composed of 14 different subunits. Subunits NuoA, H, J, K, L, M, N constitute the membrane sector of the complex.

It localises to the cell inner membrane. The enzyme catalyses a quinone + NADH + 5 H(+)(in) = a quinol + NAD(+) + 4 H(+)(out). NDH-1 shuttles electrons from NADH, via FMN and iron-sulfur (Fe-S) centers, to quinones in the respiratory chain. The immediate electron acceptor for the enzyme in this species is believed to be ubiquinone. Couples the redox reaction to proton translocation (for every two electrons transferred, four hydrogen ions are translocated across the cytoplasmic membrane), and thus conserves the redox energy in a proton gradient. This subunit may bind ubiquinone. The protein is NADH-quinone oxidoreductase subunit H of Xanthomonas campestris pv. campestris (strain 8004).